A 560-amino-acid chain; its full sequence is DNA ligase B (560 aa).

The N6-AMP-lysine intermediate role is filled by Lys-124.

This sequence belongs to the NAD-dependent DNA ligase family. LigB subfamily.

It carries out the reaction NAD(+) + (deoxyribonucleotide)n-3'-hydroxyl + 5'-phospho-(deoxyribonucleotide)m = (deoxyribonucleotide)n+m + AMP + beta-nicotinamide D-nucleotide.. In terms of biological role, catalyzes the formation of phosphodiester linkages between 5'-phosphoryl and 3'-hydroxyl groups in double-stranded DNA using NAD as a coenzyme and as the energy source for the reaction. The polypeptide is DNA ligase B (Escherichia coli O6:H1 (strain CFT073 / ATCC 700928 / UPEC)).